The following is a 221-amino-acid chain: Large ribosomal subunit protein uL16y (221 aa).

It belongs to the universal ribosomal protein uL16 family. Component of the small ribosomal subunit. Mature ribosomes consist of a small (40S) and a large (60S) subunit. The 40S subunit contains about 33 different proteins and 1 molecule of RNA (18S). The 60S subunit contains about 49 different proteins and 3 molecules of RNA (25S, 5.8S and 5S).

In Arabidopsis thaliana (Mouse-ear cress), this protein is Large ribosomal subunit protein uL16y (RPL10B).